We begin with the raw amino-acid sequence, 259 residues long: V-type proton ATPase subunit D (259 aa).

The tract at residues 214–259 is disordered; it reads KLKEQEAAQRALEGPPKEEAGGTHSENQPPRNLLAVEEDNLPVLFN.

It belongs to the V-ATPase D subunit family. V-ATPase is a heteromultimeric enzyme made up of two complexes: the ATP-hydrolytic V1 complex and the proton translocation V0 complex. The V1 complex consists of three catalytic AB heterodimers that form a heterohexamer, three peripheral stalks each consisting of EG heterodimers, one central rotor including subunits D and F, and the regulatory subunits C and H. The proton translocation complex V0 consists of the proton transport subunit a, a ring of proteolipid subunits c9c'', rotary subunit d, and The proton translocation complex V0 consists of the proton transport subunit a, a ring of proteolipid subunits c9c'', rotary subunit d, subunits e and f, and the accessory subunits vah-19/Ac45 and vah-20/PRR.

In terms of biological role, subunit of the V1 complex of vacuolar(H+)-ATPase (V-ATPase), a multisubunit enzyme composed of a peripheral complex (V1) that hydrolyzes ATP and a membrane integral complex (V0) that translocates protons. V-ATPase is responsible for acidifying and maintaining the pH of intracellular compartments and in some cell types, is targeted to the plasma membrane, where it is responsible for acidifying the extracellular environment. This is V-type proton ATPase subunit D from Caenorhabditis briggsae.